The sequence spans 313 residues: Methionyl-tRNA formyltransferase (313 aa).

S109–P112 serves as a coordination point for (6S)-5,6,7,8-tetrahydrofolate.

It belongs to the Fmt family.

It catalyses the reaction L-methionyl-tRNA(fMet) + (6R)-10-formyltetrahydrofolate = N-formyl-L-methionyl-tRNA(fMet) + (6S)-5,6,7,8-tetrahydrofolate + H(+). In terms of biological role, attaches a formyl group to the free amino group of methionyl-tRNA(fMet). The formyl group appears to play a dual role in the initiator identity of N-formylmethionyl-tRNA by promoting its recognition by IF2 and preventing the misappropriation of this tRNA by the elongation apparatus. In Thermotoga maritima (strain ATCC 43589 / DSM 3109 / JCM 10099 / NBRC 100826 / MSB8), this protein is Methionyl-tRNA formyltransferase.